Here is a 559-residue protein sequence, read N- to C-terminus: Polypeptide N-acetylgalactosaminyltransferase 1 (559 aa).

Residues 1 to 8 lie on the Cytoplasmic side of the membrane; that stretch reads MRKFAYCK. A helical; Signal-anchor for type II membrane protein membrane pass occupies residues 9-28; sequence VVLATSLIWVLLDMFLLLYF. The Lumenal segment spans residues 29 to 559; it reads SECNKCDEKK…LRNVTLPEIF (531 aa). The segment at 45-66 is disordered; the sequence is GDVLEPVQKPHEGPGEMGKPVV. Asn-95 carries N-linked (GlcNAc...) asparagine glycosylation. Intrachain disulfides connect Cys-106/Cys-339, Cys-330/Cys-408, Cys-442/Cys-459, Cys-482/Cys-497, and Cys-523/Cys-540. Residues 115–225 are catalytic subdomain A; that stretch reads LPTTSVVIVF…VGWLEPLLAR (111 aa). 2 residues coordinate substrate: Asp-156 and Arg-186. Residues Asp-209 and His-211 each coordinate Mn(2+). The tract at residues 285-347 is catalytic subdomain B; that stretch reads PVRTPTMAGG…TCSHVGHVFR (63 aa). Trp-316 provides a ligand contact to substrate. Position 344 (His-344) interacts with Mn(2+). 2 residues coordinate substrate: Arg-347 and Tyr-352. In terms of domain architecture, Ricin B-type lectin spans 429 to 551; that stretch reads SSLGEIRNVE…GSRSQQWLLR (123 aa). The N-linked (GlcNAc...) asparagine glycan is linked to Asn-552.

Belongs to the glycosyltransferase 2 family. GalNAc-T subfamily. Requires Mn(2+) as cofactor.

The protein localises to the golgi apparatus. Its subcellular location is the golgi stack membrane. It localises to the secreted. The catalysed reaction is L-seryl-[protein] + UDP-N-acetyl-alpha-D-galactosamine = a 3-O-[N-acetyl-alpha-D-galactosaminyl]-L-seryl-[protein] + UDP + H(+). It carries out the reaction L-threonyl-[protein] + UDP-N-acetyl-alpha-D-galactosamine = a 3-O-[N-acetyl-alpha-D-galactosaminyl]-L-threonyl-[protein] + UDP + H(+). It functions in the pathway protein modification; protein glycosylation. Its function is as follows. Catalyzes the initial reaction in O-linked oligosaccharide biosynthesis, the transfer of an N-acetyl-D-galactosamine residue to a serine or threonine residue on the protein receptor. Has a broad spectrum of substrates such as apomucin-, MUC5AC-, MUC1- and MUC2-derived peptides. The chain is Polypeptide N-acetylgalactosaminyltransferase 1 from Sus scrofa (Pig).